The primary structure comprises 627 residues: MTAEQALPLGNGKAAEEARGSEALGGGGGGAAGTREARDKAVHERGHWNNKVEFVLSVAGEIIGLGNVWRFPYLCYKNGGGAFLIPYVVFFICCGIPVFFLETALGQFTSEGGITCWRRVCPLFEGIGYATQVIEAHLNVYYIIILAWAIFYLSNCFTTELPWATCGHEWNTEKCVEFQKLNFSNYSHVSLQNATSPVMEFWERRVLAISDGIEHIGNLRWELALCLLAAWTICYFCIWKGTKSTGKVVYVTATFPYIMLLILLIRGVTLPGASEGIKFYLYPDLSRLSDPQVWVDAGTQIFFSYAICLGCLTALGSYNNYNNNCYRDCIMLCCLNSGTSFVAGFAIFSVLGFMAYEQGVPIAEVAESGPGLAFIAYPKAVTMMPLSPLWATLFFMMLIFLGLDSQFVCVESLVTAVVDMYPKVFRRGYRRELLILALSIVSYFLGLVMLTEGGMYIFQLFDSYAASGMCLLFVAIFECVCIGWVYGSNRFYDNIEDMIGYRPLSLIKWCWKVVTPGICAGIFIFFLVKYKPLKYNNVYTYPAWGYGIGWLMALSSMLCIPLWIFIKLWKTEGTLPEKLQKLTVPSADLKMRGKLGASPRMVTVNDCEAKVKGDGTISAITEKETHF.

The tract at residues 1-36 (MTAEQALPLGNGKAAEEARGSEALGGGGGGAAGTRE) is disordered. The Cytoplasmic segment spans residues 1 to 53 (MTAEQALPLGNGKAAEEARGSEALGGGGGGAAGTREARDKAVHERGHWNNKVE). The residue at position 21 (Ser21) is a Phosphoserine. A compositionally biased stretch (gly residues) spans 23–32 (ALGGGGGGAA). Transmembrane regions (helical) follow at residues 54–74 (FVLS…FPYL), 82–101 (AFLI…VFFL), and 126–146 (GIGY…IIIL). Residues 147 to 220 (AWAIFYLSNC…DGIEHIGNLR (74 aa)) lie on the Extracellular side of the membrane. N-linked (GlcNAc...) asparagine glycans are attached at residues Asn182, Asn185, and Asn193. The next 9 membrane-spanning stretches (helical) occupy residues 221–239 (WELA…FCIW), 248–265 (VVYV…ILLI), 301–318 (IFFS…LGSY), 330–351 (IMLC…FSVL), 384–403 (MPLS…FLGL), 433–451 (LLIL…VMLT), 468–488 (GMCL…VYGS), 509–528 (WCWK…FFLV), and 548–566 (IGWL…WIFI). The Cytoplasmic portion of the chain corresponds to 567–627 (KLWKTEGTLP…SAITEKETHF (61 aa)).

It belongs to the sodium:neurotransmitter symporter (SNF) (TC 2.A.22) family. SLC6A11 subfamily. As to expression, brain and retina. Expressed predominantly within neurons. Expressed in the hippocampus (at protein level).

The protein resides in the cell membrane. It catalyses the reaction 4-aminobutanoate(out) + chloride(out) + 2 Na(+)(out) = 4-aminobutanoate(in) + chloride(in) + 2 Na(+)(in). It carries out the reaction taurine(out) + chloride(out) + 2 Na(+)(out) = taurine(in) + chloride(in) + 2 Na(+)(in). The catalysed reaction is beta-alanine(out) + chloride(out) + 2 Na(+)(out) = beta-alanine(in) + chloride(in) + 2 Na(+)(in). The enzyme catalyses hypotaurine(out) + chloride(out) + 2 Na(+)(out) = hypotaurine(in) + chloride(in) + 2 Na(+)(in). With respect to regulation, GABA transport is inhibited by beta-alanine. In terms of biological role, mediates sodium- and chloride-dependent transport of gamma-aminobutyric acid (GABA). Can also mediate transport of beta-alanine and to a lower extent that of taurine and hypotaurine. The protein is Sodium- and chloride-dependent GABA transporter 3 (Slc6a11) of Rattus norvegicus (Rat).